We begin with the raw amino-acid sequence, 248 residues long: Adenosylcobinamide-GDP ribazoletransferase (248 aa).

The next 7 helical transmembrane spans lie at 24–44 (EINLKKGSALLPFVGVIIGAW), 70–90 (IIITGGFHVDALADTADGLFS), 106–126 (VGANGVIAICFYFLFYGALFL), 134–154 (IGWLFFVLPIVAKGVTMLLFA), 168–188 (IFLGVPWWPIVIAQVIVLVAL), 189–209 (GAFFSYIGVIAYAGVILFTII), and 228–248 (AGGQMGQLICLFCLVLLWGLI).

The protein belongs to the CobS family. The cofactor is Mg(2+).

It is found in the cell membrane. It carries out the reaction alpha-ribazole + adenosylcob(III)inamide-GDP = adenosylcob(III)alamin + GMP + H(+). It catalyses the reaction alpha-ribazole 5'-phosphate + adenosylcob(III)inamide-GDP = adenosylcob(III)alamin 5'-phosphate + GMP + H(+). The protein operates within cofactor biosynthesis; adenosylcobalamin biosynthesis; adenosylcobalamin from cob(II)yrinate a,c-diamide: step 7/7. Functionally, joins adenosylcobinamide-GDP and alpha-ribazole to generate adenosylcobalamin (Ado-cobalamin). Also synthesizes adenosylcobalamin 5'-phosphate from adenosylcobinamide-GDP and alpha-ribazole 5'-phosphate. The sequence is that of Adenosylcobinamide-GDP ribazoletransferase from Listeria monocytogenes serotype 4a (strain HCC23).